The chain runs to 115 residues: Large ribosomal subunit protein bL20c (115 aa).

This sequence belongs to the bacterial ribosomal protein bL20 family.

The protein localises to the plastid. It is found in the chloroplast. Binds directly to 23S ribosomal RNA and is necessary for the in vitro assembly process of the 50S ribosomal subunit. It is not involved in the protein synthesizing functions of that subunit. This chain is Large ribosomal subunit protein bL20c (rpl20), found in Chlorella vulgaris (Green alga).